The chain runs to 117 residues: Ribonuclease P protein component (117 aa).

Belongs to the RnpA family. Consists of a catalytic RNA component (M1 or rnpB) and a protein subunit.

The catalysed reaction is Endonucleolytic cleavage of RNA, removing 5'-extranucleotides from tRNA precursor.. RNaseP catalyzes the removal of the 5'-leader sequence from pre-tRNA to produce the mature 5'-terminus. It can also cleave other RNA substrates such as 4.5S RNA. The protein component plays an auxiliary but essential role in vivo by binding to the 5'-leader sequence and broadening the substrate specificity of the ribozyme. This is Ribonuclease P protein component from Staphylococcus aureus (strain MW2).